We begin with the raw amino-acid sequence, 280 residues long: MQNHVISLASAAERRAHIADTFGSRGIPFQFFDALMPSERLEQAMAELVPGLSAHPYLSGVEKACFMSHAVLWEQALDEGLPYIAVFEDDVLLGEGAEQFLAEDTWLEERFDKDSAFIVRLETMFAKVIVRPDKVLNYENRSFPLLESEHCGTAGYIISREAMRFFLDRFAVLPPERIKAVDLMMFTYFFDKEGMPVYQVSPALCTQELHYAKFLSQNSMLGSDLEKDREQGRRHRRSLKVMFDLKRALGKFGREKKKRMERQRQAELEKVYGRRVILFK.

This sequence belongs to the glycosyltransferase 25 family.

It participates in glycan metabolism; lacto-N-neotetraose biosynthesis. The protein operates within bacterial outer membrane biogenesis; lipooligosaccharide biosynthesis. Adds the first galactose to the lacto-N-tetraose chain in lipooligosaccharide (LOS). The chain is Lacto-N-neotetraose biosynthesis glycosyltransferase LgtE (lgtE) from Neisseria gonorrhoeae.